Consider the following 366-residue polypeptide: Hydroxyproline O-arabinosyltransferase 1 (366 aa).

A helical; Signal-anchor transmembrane segment spans residues 6–26 (TLFYPLLITLSVALITYNIII).

In terms of tissue distribution, ubiquitous.

The protein localises to the golgi apparatus. It localises to the cis-Golgi network membrane. The catalysed reaction is trans-4-hydroxy-L-prolyl-[protein] + UDP-beta-L-arabinofuranose = O-(beta-L-arabinofuranosyl)-trans-4-hydroxy-L-prolyl-[protein] + UDP + H(+). In terms of biological role, glycosyltransferase involved in the O-arabinosylation of several proteins including extensins and small signaling peptides. Catalyzes the transfer of the initial L-arabinose to the hydroxyl group of Hyp residues. Contributes redundantly with HPAT2 and HPAT3 to arabinosylation of EXT3. The sequence is that of Hydroxyproline O-arabinosyltransferase 1 from Arabidopsis thaliana (Mouse-ear cress).